Reading from the N-terminus, the 383-residue chain is Na(+)/H(+) antiporter NhaA (383 aa).

Transmembrane regions (helical) follow at residues Leu-10–Pro-30, Leu-56–Ile-76, Ile-91–Ser-111, Gly-121–Gly-141, Leu-150–Phe-170, Ser-174–Asn-194, Val-206–Ala-226, Pro-254–Ser-274, Ile-289–Phe-308, Gly-327–Phe-347, and Ala-355–Leu-375.

It belongs to the NhaA Na(+)/H(+) (TC 2.A.33) antiporter family.

Its subcellular location is the cell inner membrane. The catalysed reaction is Na(+)(in) + 2 H(+)(out) = Na(+)(out) + 2 H(+)(in). Functionally, na(+)/H(+) antiporter that extrudes sodium in exchange for external protons. The polypeptide is Na(+)/H(+) antiporter NhaA (Francisella tularensis subsp. mediasiatica (strain FSC147)).